We begin with the raw amino-acid sequence, 446 residues long: Probable D-serine dehydratase (446 aa).

K118 carries the post-translational modification N6-(pyridoxal phosphate)lysine.

Belongs to the serine/threonine dehydratase family. DsdA subfamily. Pyridoxal 5'-phosphate serves as cofactor.

It carries out the reaction D-serine = pyruvate + NH4(+). In Ectopseudomonas mendocina (strain ymp) (Pseudomonas mendocina), this protein is Probable D-serine dehydratase.